The sequence spans 317 residues: DNA-directed RNA polymerase subunit alpha 2 (317 aa).

Residues 1–227 (MALENLLHPT…NQLRNIVDIE (227 aa)) are alpha N-terminal domain (alpha-NTD). The alpha C-terminal domain (alpha-CTD) stretch occupies residues 241 to 317 (INPILLKHVE…TLIENWPQDL (77 aa)).

This sequence belongs to the RNA polymerase alpha chain family. Homodimer. The RNAP catalytic core consists of 2 alpha, 1 beta, 1 beta' and 1 omega subunit. When a sigma factor is associated with the core the holoenzyme is formed, which can initiate transcription.

It carries out the reaction RNA(n) + a ribonucleoside 5'-triphosphate = RNA(n+1) + diphosphate. Functionally, DNA-dependent RNA polymerase catalyzes the transcription of DNA into RNA using the four ribonucleoside triphosphates as substrates. The chain is DNA-directed RNA polymerase subunit alpha 2 from Francisella tularensis subsp. holarctica (strain FTNF002-00 / FTA).